The primary structure comprises 281 residues: Elongation factor Ts (281 aa).

Residues Thr-80–Val-83 form an involved in Mg(2+) ion dislocation from EF-Tu region.

Belongs to the EF-Ts family.

It is found in the cytoplasm. In terms of biological role, associates with the EF-Tu.GDP complex and induces the exchange of GDP to GTP. It remains bound to the aminoacyl-tRNA.EF-Tu.GTP complex up to the GTP hydrolysis stage on the ribosome. In Vibrio campbellii (strain ATCC BAA-1116), this protein is Elongation factor Ts.